The sequence spans 103 residues: Small ribosomal subunit protein uS10 (103 aa).

It belongs to the universal ribosomal protein uS10 family. As to quaternary structure, part of the 30S ribosomal subunit.

Its function is as follows. Involved in the binding of tRNA to the ribosomes. This chain is Small ribosomal subunit protein uS10, found in Colwellia psychrerythraea (strain 34H / ATCC BAA-681) (Vibrio psychroerythus).